Consider the following 344-residue polypeptide: tRNA N6-adenosine threonylcarbamoyltransferase (344 aa).

Fe cation contacts are provided by H111 and H115. Substrate is bound by residues 133-137, D166, G179, and N283; that span reads LVSGG. D311 is a Fe cation binding site.

This sequence belongs to the KAE1 / TsaD family. Requires Fe(2+) as cofactor.

It localises to the cytoplasm. The enzyme catalyses L-threonylcarbamoyladenylate + adenosine(37) in tRNA = N(6)-L-threonylcarbamoyladenosine(37) in tRNA + AMP + H(+). In terms of biological role, required for the formation of a threonylcarbamoyl group on adenosine at position 37 (t(6)A37) in tRNAs that read codons beginning with adenine. Is involved in the transfer of the threonylcarbamoyl moiety of threonylcarbamoyl-AMP (TC-AMP) to the N6 group of A37, together with TsaE and TsaB. TsaD likely plays a direct catalytic role in this reaction. The sequence is that of tRNA N6-adenosine threonylcarbamoyltransferase from Orientia tsutsugamushi (strain Ikeda) (Rickettsia tsutsugamushi).